The chain runs to 76 residues: Acyl carrier protein (76 aa).

Residues 1–76 (MDTFESVKAV…DVVAYIEANK (76 aa)) enclose the Carrier domain. An O-(pantetheine 4'-phosphoryl)serine modification is found at Ser36.

The protein belongs to the acyl carrier protein (ACP) family. In terms of processing, 4'-phosphopantetheine is transferred from CoA to a specific serine of apo-ACP by AcpS. This modification is essential for activity because fatty acids are bound in thioester linkage to the sulfhydryl of the prosthetic group.

Its subcellular location is the cytoplasm. It participates in lipid metabolism; fatty acid biosynthesis. Its function is as follows. Carrier of the growing fatty acid chain in fatty acid biosynthesis. The chain is Acyl carrier protein from Helicobacter hepaticus (strain ATCC 51449 / 3B1).